A 153-amino-acid chain; its full sequence is Cytochrome c-type biogenesis protein CcmE (153 aa).

Over 1-6 the chain is Cytoplasmic; the sequence is MNARRR. The chain crosses the membrane as a helical; Signal-anchor for type II membrane protein span at residues 7–27; that stretch reads LWSVLMLILAVGTAATLTIMA. Over 28–153 the chain is Periplasmic; sequence LRHNLTYLYM…LDTPIAETTP (126 aa). Positions 121 and 125 each coordinate heme. Polar residues predominate over residues 131–141; the sequence is ANKMQPTPTQH. The interval 131 to 153 is disordered; it reads ANKMQPTPTQHTHLDTPIAETTP.

This sequence belongs to the CcmE/CycJ family.

The protein resides in the cell inner membrane. Heme chaperone required for the biogenesis of c-type cytochromes. Transiently binds heme delivered by CcmC and transfers the heme to apo-cytochromes in a process facilitated by CcmF and CcmH. The chain is Cytochrome c-type biogenesis protein CcmE from Xylella fastidiosa (strain Temecula1 / ATCC 700964).